Here is a 268-residue protein sequence, read N- to C-terminus: Satratoxin biosynthesis SC1 cluster protein 4 (268 aa).

A run of 4 helical transmembrane segments spans residues 34-54 (VWLVGIVQGCWGIAILLVHIF), 78-98 (LFAIYEALNSVLDFIVAGLAI), 113-133 (HLAGLFVLGAFSGFIGIIKIV), and 145-165 (AVIWNVVQMSISIICCCAPIY).

This sequence belongs to the SAT4 family.

Its subcellular location is the membrane. Its pathway is mycotoxin biosynthesis. Part of the satratoxin SC1 cluster involved in the biosynthesis of satratoxins, trichothecene mycotoxins that are associated with human food poisonings. Satratoxins are suggested to be made by products of multiple gene clusters (SC1, SC2 and SC3) that encode 21 proteins in all, including polyketide synthases, acetyltransferases, and other enzymes expected to modify the trichothecene skeleton. SC1 encodes 10 proteins, SAT1 to SAT10. The largest are SAT8, which encodes a putative polyketide synthase (PKS) with a conventional non-reducing architecture, and SAT10, a putative protein containing four ankyrin repeats and thus may be involved in protein scaffolding. The putative short-chain reductase SAT3 may assist the PKS in some capacity. SAT6 contains a secretory lipase domain and acts probably as a trichothecene esterase. SAT5 encodes a putative acetyltransferase, and so, with SAT6, may affect endogenous protection from toxicity. The probable transcription factor SAT9 may regulate the expression of the SC1 cluster. SC2 encodes proteins SAT11 to SAT16, the largest of which encodes the putative reducing PKS SAT13. SAT11 is a cytochrome P450 monooxygenase, while SAT14 and SAT16 are probable acetyltransferases. The SC2 cluster may be regulated by the transcription factor SAT15. SC3 is a small cluster that encodes 5 proteins, SAT17 to SAT21. SAT21 is a putative MFS-type transporter which may have a role in exporting secondary metabolites. The four other proteins putatively encoded in SC3 include the taurine hydroxylase-like protein SAT17, the O-methyltransferase SAT18, the acetyltransferase SAT19, and the Cys6-type zinc finger SAT20, the latter being probably involved in regulation of SC3 expression. This is Satratoxin biosynthesis SC1 cluster protein 4 from Stachybotrys chartarum (strain CBS 109288 / IBT 7711) (Toxic black mold).